The primary structure comprises 102 residues: Antitoxin VapB46 (102 aa).

This sequence belongs to the phD/YefM antitoxin family.

Its function is as follows. Antitoxin component of a type II toxin-antitoxin (TA) system. Neutralizes the effect of cognate toxin VapC46. The sequence is that of Antitoxin VapB46 (vapB46) from Mycobacterium tuberculosis (strain CDC 1551 / Oshkosh).